Here is a 144-residue protein sequence, read N- to C-terminus: Large ribosomal subunit protein uL15 (144 aa).

The segment at 1-52 (MRLNTLSPAEGAKHAPKRVGRGIGSGLGKTGGRGHKGQKSRSGGGVRRGFEG) is disordered. Gly residues predominate over residues 21-31 (RGIGSGLGKTG).

It belongs to the universal ribosomal protein uL15 family. Part of the 50S ribosomal subunit.

Binds to the 23S rRNA. This chain is Large ribosomal subunit protein uL15, found in Buchnera aphidicola subsp. Acyrthosiphon kondoi (Acyrthosiphon kondoi symbiotic bacterium).